The primary structure comprises 311 residues: Malate dehydrogenase (311 aa).

Residues G7 to G13 and D34 each bind NAD(+). Residues R81 and R87 each coordinate substrate. NAD(+)-binding positions include N94 and I117 to N119. 2 residues coordinate substrate: N119 and R153. Residue H177 is the Proton acceptor of the active site. Residue M227 coordinates NAD(+).

Belongs to the LDH/MDH superfamily. MDH type 1 family. As to quaternary structure, homodimer.

The catalysed reaction is (S)-malate + NAD(+) = oxaloacetate + NADH + H(+). Catalyzes the reversible oxidation of malate to oxaloacetate. The polypeptide is Malate dehydrogenase (Shewanella sediminis (strain HAW-EB3)).